An 810-amino-acid polypeptide reads, in one-letter code: Hemoglobin-haptoglobin utilization protein B (810 aa).

Residues 1–22 (MPIPFKPVLAVAAIAQAFPAFA) form the signal peptide. In terms of domain architecture, TBDR plug spans 34–166 (NEITVTGTHK…LGGAVNYQTK (133 aa)). One can recognise a TBDR beta-barrel domain in the interval 175–810 (DKPYHLGIKG…SYNFTIEAKF (636 aa)). Positions 793–810 (QRFTSPGRSYNFTIEAKF) match the TonB C-terminal box motif.

This sequence belongs to the TonB-dependent receptor family.

Its subcellular location is the cell outer membrane. Acts as a receptor for hemoglobin or the hemoglobin/haptoglobin complex and is required for heme uptake. In Neisseria meningitidis serogroup C, this protein is Hemoglobin-haptoglobin utilization protein B (hpuB).